A 361-amino-acid polypeptide reads, in one-letter code: 3-dehydroquinate synthase (361 aa).

Residues 105–109 (GVIGD), 129–130 (TT), lysine 142, lysine 151, and 169–172 (FLST) contribute to the NAD(+) site. Zn(2+)-binding residues include glutamate 184, histidine 247, and histidine 264.

The protein belongs to the sugar phosphate cyclases superfamily. Dehydroquinate synthase family. Requires Co(2+) as cofactor. Zn(2+) serves as cofactor. NAD(+) is required as a cofactor.

Its subcellular location is the cytoplasm. The enzyme catalyses 7-phospho-2-dehydro-3-deoxy-D-arabino-heptonate = 3-dehydroquinate + phosphate. It participates in metabolic intermediate biosynthesis; chorismate biosynthesis; chorismate from D-erythrose 4-phosphate and phosphoenolpyruvate: step 2/7. Functionally, catalyzes the conversion of 3-deoxy-D-arabino-heptulosonate 7-phosphate (DAHP) to dehydroquinate (DHQ). In Endomicrobium trichonymphae, this protein is 3-dehydroquinate synthase.